A 475-amino-acid polypeptide reads, in one-letter code: ATP synthase subunit beta (475 aa).

152-159 (GGAGVGKT) contributes to the ATP binding site.

The protein belongs to the ATPase alpha/beta chains family. F-type ATPases have 2 components, CF(1) - the catalytic core - and CF(0) - the membrane proton channel. CF(1) has five subunits: alpha(3), beta(3), gamma(1), delta(1), epsilon(1). CF(0) has four main subunits: a(1), b(1), b'(1) and c(9-12).

The protein localises to the cell inner membrane. The enzyme catalyses ATP + H2O + 4 H(+)(in) = ADP + phosphate + 5 H(+)(out). Functionally, produces ATP from ADP in the presence of a proton gradient across the membrane. The catalytic sites are hosted primarily by the beta subunits. The sequence is that of ATP synthase subunit beta from Cereibacter sphaeroides (strain ATCC 17025 / ATH 2.4.3) (Rhodobacter sphaeroides).